Consider the following 760-residue polypeptide: Catecholate siderophore receptor Fiu (760 aa).

Positions 1–31 (MENNRNFPARQFHSLTFFAGLCIGITPVAQA) are cleaved as a signal peptide. Residues 67-175 (PVADTTRTMT…PTGSINMISK (109 aa)) form the TBDR plug domain. A TBDR beta-barrel domain is found at 180-760 (DSGIDASASI…TFLLTANMHF (581 aa)). The short motif at 743 to 760 (RYHPGEPRTFLLTANMHF) is the TonB C-terminal box element.

This sequence belongs to the TonB-dependent receptor family.

The protein resides in the cell outer membrane. Functionally, involved in the active transport across the outer membrane of iron complexed with catecholate siderophores such as dihydroxybenzoylserine and dihydroxybenzoate. It derives its energy for transport by interacting with the trans-periplasmic membrane protein TonB. Can also transport catechol-substituted cephalosporins. Receptor for microcins M, H47 and E492. The polypeptide is Catecholate siderophore receptor Fiu (fiu) (Escherichia coli O157:H7).